Here is a 273-residue protein sequence, read N- to C-terminus: Undecaprenyl-diphosphatase (273 aa).

A run of 7 helical transmembrane segments spans residues 4 to 24 (FLLL…FLPI), 43 to 63 (KGKV…CWEY), 83 to 103 (FVLN…LFIK), 109 to 129 (LFHP…ILWA), 184 to 204 (ATEF…FYDL), 218 to 238 (VFAI…RGLL), and 248 to 268 (VFAW…YSGM).

It belongs to the UppP family.

Its subcellular location is the cell inner membrane. It carries out the reaction di-trans,octa-cis-undecaprenyl diphosphate + H2O = di-trans,octa-cis-undecaprenyl phosphate + phosphate + H(+). Its function is as follows. Catalyzes the dephosphorylation of undecaprenyl diphosphate (UPP). Confers resistance to bacitracin. The chain is Undecaprenyl-diphosphatase from Nitrosospira multiformis (strain ATCC 25196 / NCIMB 11849 / C 71).